Reading from the N-terminus, the 88-residue chain is Large ribosomal subunit protein eL34 (88 aa).

It belongs to the eukaryotic ribosomal protein eL34 family.

This Methanobrevibacter smithii (strain ATCC 35061 / DSM 861 / OCM 144 / PS) protein is Large ribosomal subunit protein eL34.